We begin with the raw amino-acid sequence, 375 residues long: MENLCQRLNACQEKILDYYELDSNKLTDQIDYWKLVRYECAIFYKAREGNMQCINHQVVPSTVVCKQKAWQAIEIHIALQSLINTDYNTEAWTMRDTSYEMYMTEPKHCFKKEGTTVTVVFDCNKENTMDYIRWKYVYYKTDIGWCKGTGDVDAKGIYYTQGAYKQYYVDFKQEAEKYGTGVQWAVHVCGQVICCPEFVSSTCSSNQISTAKTAEPVSNATTQTTEAYVPVGTKETEAPYPGKRRRLSGPDTTVTTVTTVTTAATQPGQSVDYTNNNLHSTSGGHHPGRDTSSDQTVFIVHLKGDTNSLKCLRYRFKKHKGLYCNVSSTWHWTSNDTNQQGIVTITFNSITQRNNFLTTVKIPQSITSTLGIMSL.

The interval 1-200 (MENLCQRLNA…QVICCPEFVS (200 aa)) is transactivation domain. The interval 264–292 (ATQPGQSVDYTNNNLHSTSGGHHPGRDTS) is disordered. Polar residues predominate over residues 266-283 (QPGQSVDYTNNNLHSTSG). Residues 296 to 375 (TVFIVHLKGD…ITSTLGIMSL (80 aa)) are DNA-binding domain. Lys-303 is covalently cross-linked (Glycyl lysine isopeptide (Lys-Gly) (interchain with G-Cter in SUMO)).

It belongs to the papillomaviridae E2 protein family. Binds DNA as homodimer. Interacts with protein E1; this interaction greatly increases E1 DNA-binding activity. Interacts with protein L1; this interaction enhances E2-dependent replication and transcription activation. Interacts with protein L2; this interaction inhibits E2 transcriptional activity but not DNA replication function E2. Interacts with protein E7; this interaction inhibits E7 oncogenic activity. Interacts with host TAF1; this interaction modulates E2-dependent transcriptional regulation. Interacts with host BRD4; this interaction mediates E2 transcriptional activation function. Additionally, the interaction with host BRD4 on mitotic chromosomes mediates tethering of the viral genome. Interacts with host TOPBP1; this interaction is required for optimal viral DNA replication. Phosphorylated. In terms of processing, sumoylation plays a regulatory role in E2 transcriptional activity.

The protein localises to the host nucleus. Functionally, plays a role in the initiation of viral DNA replication. A dimer of E2 interacts with a dimer of E1 in order to improve specificity of E1 DNA binding activity. Once the complex recognizes and binds DNA at specific sites, the E2 dimer is removed from DNA. E2 also regulates viral transcription through binding to the E2RE response element (5'-ACCNNNNNNGGT-3') present in multiple copies in the regulatory regions of the viral genome. Activates or represses transcription depending on E2RE's position with regards to proximal promoter elements including the TATA-box. Repression occurs by sterically hindering the assembly of the transcription initiation complex. In Human papillomavirus type 26, this protein is Regulatory protein E2.